A 252-amino-acid chain; its full sequence is Type III pantothenate kinase (252 aa).

6–13 (DIGNTSTA) serves as a coordination point for ATP. A substrate-binding site is contributed by 104-107 (GADR). Residue Asp-106 is the Proton acceptor of the active site. Residue Asp-128 coordinates K(+). Thr-131 is an ATP binding site. Thr-183 contributes to the substrate binding site.

The protein belongs to the type III pantothenate kinase family. In terms of assembly, homodimer. NH4(+) serves as cofactor. Requires K(+) as cofactor.

The protein resides in the cytoplasm. The catalysed reaction is (R)-pantothenate + ATP = (R)-4'-phosphopantothenate + ADP + H(+). The protein operates within cofactor biosynthesis; coenzyme A biosynthesis; CoA from (R)-pantothenate: step 1/5. In terms of biological role, catalyzes the phosphorylation of pantothenate (Pan), the first step in CoA biosynthesis. The protein is Type III pantothenate kinase of Thermus thermophilus (strain ATCC BAA-163 / DSM 7039 / HB27).